We begin with the raw amino-acid sequence, 172 residues long: Trypsin inhibitor DE-3 (172 aa).

Disulfide bonds link C39/C83 and C132/C139.

The protein belongs to the protease inhibitor I3 (leguminous Kunitz-type inhibitor) family.

Inhibition of trypsin. The sequence is that of Trypsin inhibitor DE-3 from Erythrina caffra (Kaffir tree).